A 61-amino-acid polypeptide reads, in one-letter code: uncharacterized protein (61 aa).

Helical transmembrane passes span 4–24 (IIAFIWTFLLSHMACYLVASM) and 34–54 (SSVIAVVLYVLIMVLAEIMPM).

Its subcellular location is the cell membrane. This is an uncharacterized protein from Bacillus subtilis (strain 168).